A 1408-amino-acid chain; its full sequence is Palladin (1408 aa).

Residues 69-229 (SKSPISLCET…SASQSPTADQ (161 aa)) form a disordered region. Polar residues-rich tracts occupy residues 149–169 (PNPS…QSQL) and 193–229 (RSPN…TADQ). S194 bears the Phosphoserine mark. 2 Ig-like C2-type domains span residues 278-367 (PRFI…AEVF) and 448-546 (PVFT…LVIT). Intrachain disulfides connect C299/C351 and C469/C528. Positions 569–573 (FPPPP) are interaction with VASP. Disordered stretches follow at residues 631–660 (NGKA…LAKP) and 687–727 (PPGV…VPSE). S639 carries the phosphoserine modification. T642 is subject to Phosphothreonine. S648 carries the phosphoserine modification. The interaction with LASP1 stretch occupies residues 653–683 (PPPLLAKPKLDPLKLQQLQNQVRLEQEACAW). The segment at 683–713 (WPPAPPGVPCNSSSSGSSAPPSPPFPPPPPA) is interaction with SORBS2, SPIN90 and SRC. Low complexity predominate over residues 691 to 701 (PCNSSSSGSSA). S700, S704, and S744 each carry phosphoserine. A compositionally biased stretch (pro residues) spans 702 to 714 (PPSPPFPPPPPAF). Disordered stretches follow at residues 758 to 854 (NLGP…RFGP), 882 to 904 (KGVT…SDEE), and 960 to 981 (ETAA…LDGQ). The span at 765–779 (LPTPTSSPSSSSLPS) shows a compositional bias: low complexity. Pro residues-rich tracts occupy residues 780–797 (PLSP…PPFV), 807–818 (SPSPPPPPPPVF), and 828–840 (DVFP…PPLP). The tract at residues 782-842 (SPTPRPFGRA…PPPPPPLPSS (61 aa)) is interaction with EPS8. The tract at residues 807 to 842 (SPSPPPPPPPVFSPSAAYPVPDVFPLPPPPPPLPSS) is interaction with SORBS2, SPIN90, SRC and PFN1. The segment at 830–834 (FPLPP) is interaction with VASP. S901 carries the post-translational modification Phosphoserine. S1004 and S1009 each carry phosphoserine. Positions 1026-1110 (PFFEMKLKHY…MAANPQGRVS (85 aa)) constitute an Ig-like C2-type 3 domain. The disordered stretch occupies residues 1121–1150 (NQRGRSPRSPSGHPHARRPRSRSRDSGDEN). Residues 1123–1133 (RGRSPRSPSGH) are compositionally biased toward low complexity. A phosphoserine mark is found at S1126, S1129, S1131, and S1141. The residue at position 1143 (S1143) is a Phosphoserine; by PKB/AKT1. The residue at position 1146 (S1146) is a Phosphoserine. Ig-like C2-type domains are found at residues 1160–1251 (PHFL…LVVA) and 1259–1349 (PVFM…ARLD). Interaction with EZR regions lie at residues 1162 to 1251 (FLQA…LVVA) and 1261 to 1351 (FMEK…LDVY). A disulfide bridge connects residues C1181 and C1233. S1377 is modified (phosphoserine).

Belongs to the myotilin/palladin family. In terms of assembly, interacts with EPS8. Interacts with LASP1. Interacts with VASP. Interacts with ACTN. Interacts with SORBS2. Interacts with PFN1. Interacts with LPP. Interacts with SPIN90. Interacts with SRC. Interacts with EZR. Interacts with RAI14. Phosphorylated predominantly on serines and, to a lesser extent, on tyrosines. Phosphorylation at Ser-1143 by PKB/AKT1 modulates cytoskeletal organization and cell motility. In terms of tissue distribution, detected in both muscle and non-muscle tissues and cells (at protein level). Isoform 3 is widely expressed, isoform 4 is particularly abundant in tissues rich in smooth muscle and in the cardiac muscle and isoform 1 is detected in heart.

It localises to the cytoplasm. The protein localises to the cytoskeleton. It is found in the cell junction. Its subcellular location is the focal adhesion. The protein resides in the myofibril. It localises to the sarcomere. The protein localises to the z line. It is found in the cell projection. Its subcellular location is the ruffle. The protein resides in the podosome. It localises to the lamellipodium. The protein localises to the axon. It is found in the growth cone. In terms of biological role, cytoskeletal protein required for organization of normal actin cytoskeleton. Roles in establishing cell morphology, motility, cell adhesion and cell-extracellular matrix interactions in a variety of cell types. May function as a scaffolding molecule with the potential to influence both actin polymerization and the assembly of existing actin filaments into higher-order arrays. Binds to proteins that bind to either monomeric or filamentous actin. Localizes at sites where active actin remodeling takes place, such as lamellipodia and membrane ruffles. Different isoforms may have functional differences. Involved in the control of morphological and cytoskeletal changes associated with dendritic cell maturation. Involved in targeting ACTN to specific subcellular locations. May be required for the initiation of neural tube closure. The polypeptide is Palladin (Palld) (Mus musculus (Mouse)).